A 418-amino-acid chain; its full sequence is 3-isopropylmalate dehydratase large subunit (418 aa).

[4Fe-4S] cluster contacts are provided by Cys-299, Cys-359, and Cys-362.

The protein belongs to the aconitase/IPM isomerase family. LeuC type 2 subfamily. As to quaternary structure, heterodimer of LeuC and LeuD. The cofactor is [4Fe-4S] cluster.

The catalysed reaction is (2R,3S)-3-isopropylmalate = (2S)-2-isopropylmalate. The protein operates within amino-acid biosynthesis; L-leucine biosynthesis; L-leucine from 3-methyl-2-oxobutanoate: step 2/4. Its function is as follows. Catalyzes the isomerization between 2-isopropylmalate and 3-isopropylmalate, via the formation of 2-isopropylmaleate. This is 3-isopropylmalate dehydratase large subunit from Oleidesulfovibrio alaskensis (strain ATCC BAA-1058 / DSM 17464 / G20) (Desulfovibrio alaskensis).